Here is a 374-residue protein sequence, read N- to C-terminus: MNFNKLKFGATIGIIGGGQLGKMMAQSAQKMGYKVAVLDPAEDCPCRYVAHEFIQAKYDDEKALNQLGQKCDVITYEFENISAQQLKLLCEKYNIPQGYQAIQLLQDRLTEKETLKSAGTKVVPFISVKESKDIDKAIETLGYPFIVKTRFGGYDGKGQVLINNEKDLQEGIKLIETSECVAEKYLNIKKEVSLTVTRGNNNQITYFPLQENEHRNQILFKTIVPARIDKIAEAKEQVNKIIQSIHFIGTFTVEFFIDSNNQLYVNEIAPRPHNSGHYSIEACDYSQFDTHILAVTGQSLPNSIELLKPAVMMNLLGKDLDLLENEFNEHPEWHLHIYGKSERKDSRKMGHMTVLTNDVNQTEQDMYAKFEGSN.

Residues R108, K148, 153 to 159 (GYDGKGQ), 183 to 186 (EKYL), E191, H214, and 266 to 267 (NE) each bind ATP. Residues 112–296 (KETLKSAGTK…QFDTHILAVT (185 aa)) form the ATP-grasp domain.

Belongs to the PurK/PurT family. Homodimer.

The enzyme catalyses 5-amino-1-(5-phospho-beta-D-ribosyl)imidazole + hydrogencarbonate + ATP = 5-carboxyamino-1-(5-phospho-D-ribosyl)imidazole + ADP + phosphate + 2 H(+). Its pathway is purine metabolism; IMP biosynthesis via de novo pathway; 5-amino-1-(5-phospho-D-ribosyl)imidazole-4-carboxylate from 5-amino-1-(5-phospho-D-ribosyl)imidazole (N5-CAIR route): step 1/2. Its function is as follows. Catalyzes the ATP-dependent conversion of 5-aminoimidazole ribonucleotide (AIR) and HCO(3)(-) to N5-carboxyaminoimidazole ribonucleotide (N5-CAIR). This chain is N5-carboxyaminoimidazole ribonucleotide synthase, found in Staphylococcus aureus (strain MRSA252).